The following is a 1007-amino-acid chain: Glutamate receptor ionotropic, delta-2 (1007 aa).

An N-terminal signal peptide occupies residues 1–23; that stretch reads MEVFPLLLFLSFCWSRTWDLATA. An interaction with CBLN1 homotrimer region spans residues 24–345; that stretch reads DSIIHIGAIF…NAFHKKLEDR (322 aa). The Extracellular portion of the chain corresponds to 24 to 566; sequence DSIIHIGAIF…DMFACLAPFD (543 aa). 3 disulfide bridges follow: cysteine 83/cysteine 355, cysteine 99/cysteine 131, and cysteine 298/cysteine 310. The N-linked (GlcNAc...) asparagine glycan is linked to asparagine 293. An N-linked (GlcNAc...) asparagine glycan is attached at asparagine 426. The Ca(2+) site is built by glutamate 531, valine 534, and aspartate 535. Residues 567 to 587 traverse the membrane as a helical segment; the sequence is LSLWACIAGTVLLVGLLVYLL. Over 588–635 the chain is Cytoplasmic; sequence NWLNPPRLQMGSMTSTTLYNSMWFVYGSFVQQGGEVPYTTLATRMMMG. Residues 636 to 656 form a helical membrane-spanning segment; sequence AWWLFALIVISSYTANLAAFL. Over 657–830 the chain is Extracellular; it reads TITRIESSIQ…QKGGALDIKS (174 aa). Residues asparagine 713 and asparagine 716 are each glycosylated (N-linked (GlcNAc...) asparagine). Residues aspartate 753, aspartate 755, and serine 757 each coordinate Ca(2+). A helical membrane pass occupies residues 831–851; it reads LAGVFCILAAGIVLSCLIAVL. Residues 852-1007 lie on the Cytoplasmic side of the membrane; sequence ETWWSRRKGS…GNDPDRGTSI (156 aa). Position 883 is a phosphoserine (serine 883). Residue threonine 886 is modified to Phosphothreonine. Serine 890 is subject to Phosphoserine. Residues 921–991 form an interaction with AP4M1 region; it reads DFRNTHITTT…MSSIPYQPTP (71 aa). The PDZ-binding motif lies at 1005–1007; sequence TSI. A Phosphoserine modification is found at serine 1006.

Belongs to the glutamate-gated ion channel (TC 1.A.10.1) family. GRID2 subfamily. As to quaternary structure, tetramer; dimer of dimers. Interacts with EML2, MAGI2 (via PDZ domains) and AP4M1. Interacts with BECN1, GOPC, GRID2IP, SHANK1 and SHANK2. Interacts with CBLN2, but not with CBLN4. Interacts with CBLN1 (via C1q domain); the interaction is CBLN1-NRX1 complex formation-dependent; CBLN1-binding is calcium-independent; CBLN1 hexamers anchor GRID2 N-terminal domain dimers to monomeric NRXN1 isoform beta; promotes synaptogenesis and mediates the D-Serine-dependent long term depression signals and AMPA receptor endocytosis. In terms of tissue distribution, expressed selectively in cerebellar Purkinje cells where it is localized in dendritic spines.

The protein resides in the postsynaptic cell membrane. It catalyses the reaction Ca(2+)(in) = Ca(2+)(out). The catalysed reaction is Na(+)(in) = Na(+)(out). Member of the ionotropic glutamate receptor family, which plays a crucial role in synaptic organization and signal transduction in the central nervous system. Although it shares structural features with ionotropic glutamate receptors, does not bind glutamate as a primary ligand. Promotes synaptogenesis and mediates the D-Serine-dependent long term depression signals and AMPA receptor endocytosis of cerebellar parallel fiber-Purkinje cell (PF-PC) synapses through the NRX1B-CBLN1-GRID2 triad complex. In the presence of neurexins and cerebellins, forms cation-selective channels that are proposed to be gated by glycine and D-serine. However, recent research disputes this ligand-gated cation channel activity. Cation-selective ion channel activity can be triggered by GRM1 in Purkinje cells. The chain is Glutamate receptor ionotropic, delta-2 (Grid2) from Mus musculus (Mouse).